A 60-amino-acid polypeptide reads, in one-letter code: Large ribosomal subunit protein bL32 (60 aa).

Residues 1–16 (MPNPKRRHSKKRTSTR) are compositionally biased toward basic residues. The interval 1–28 (MPNPKRRHSKKRTSTRRAHDALKQPGLS) is disordered.

It belongs to the bacterial ribosomal protein bL32 family.

This is Large ribosomal subunit protein bL32 from Solibacter usitatus (strain Ellin6076).